A 243-amino-acid polypeptide reads, in one-letter code: Phosphoribosyl isomerase A (243 aa).

The active-site Proton acceptor is the D9. The Proton donor role is filled by D128.

The protein belongs to the HisA/HisF family.

The protein localises to the cytoplasm. It catalyses the reaction 1-(5-phospho-beta-D-ribosyl)-5-[(5-phospho-beta-D-ribosylamino)methylideneamino]imidazole-4-carboxamide = 5-[(5-phospho-1-deoxy-D-ribulos-1-ylimino)methylamino]-1-(5-phospho-beta-D-ribosyl)imidazole-4-carboxamide. The enzyme catalyses N-(5-phospho-beta-D-ribosyl)anthranilate = 1-(2-carboxyphenylamino)-1-deoxy-D-ribulose 5-phosphate. Its pathway is amino-acid biosynthesis; L-histidine biosynthesis; L-histidine from 5-phospho-alpha-D-ribose 1-diphosphate: step 4/9. It participates in amino-acid biosynthesis; L-tryptophan biosynthesis; L-tryptophan from chorismate: step 3/5. In terms of biological role, involved in both the histidine and tryptophan biosynthetic pathways. In Mycobacterium avium (strain 104), this protein is Phosphoribosyl isomerase A.